A 761-amino-acid polypeptide reads, in one-letter code: Mitochondrial intermediate peptidase (761 aa).

The N-terminal 37 residues, 1 to 37 (MLIQKILLNKEISRLPRILSILNYTGLRWLSGSSGRN), are a transit peptide targeting the mitochondrion. His-547 is a Zn(2+) binding site. Residue Glu-548 is part of the active site. Zn(2+) contacts are provided by His-551 and His-554.

Belongs to the peptidase M3 family. The cofactor is Zn(2+).

It is found in the mitochondrion matrix. The catalysed reaction is Release of an N-terminal octapeptide as second stage of processing of some proteins imported into the mitochondrion.. Functionally, cleaves proteins, imported into the mitochondrion, to their mature size. While most mitochondrial precursor proteins are processed to the mature form in one step by mitochondrial processing peptidase (MPP), the sequential cleavage by MIP of an octapeptide after initial processing by MPP is a required step for a subgroup of nuclear-encoded precursor proteins destined for the matrix or the inner membrane. This Candida glabrata (strain ATCC 2001 / BCRC 20586 / JCM 3761 / NBRC 0622 / NRRL Y-65 / CBS 138) (Yeast) protein is Mitochondrial intermediate peptidase (OCT1).